Reading from the N-terminus, the 290-residue chain is uncharacterized protein (290 aa).

Belongs to the glycosyltransferase 2 family.

This is an uncharacterized protein from Methanocaldococcus jannaschii (strain ATCC 43067 / DSM 2661 / JAL-1 / JCM 10045 / NBRC 100440) (Methanococcus jannaschii).